A 296-amino-acid chain; its full sequence is tRNA dimethylallyltransferase (296 aa).

ATP is bound at residue 11 to 18 (GPTAVGKT). 13 to 18 (TAVGKT) is a substrate binding site. The interaction with substrate tRNA stretch occupies residues 36–39 (DSQQ).

Belongs to the IPP transferase family. In terms of assembly, monomer. It depends on Mg(2+) as a cofactor.

It catalyses the reaction adenosine(37) in tRNA + dimethylallyl diphosphate = N(6)-dimethylallyladenosine(37) in tRNA + diphosphate. Catalyzes the transfer of a dimethylallyl group onto the adenine at position 37 in tRNAs that read codons beginning with uridine, leading to the formation of N6-(dimethylallyl)adenosine (i(6)A). The protein is tRNA dimethylallyltransferase of Streptococcus agalactiae serotype Ia (strain ATCC 27591 / A909 / CDC SS700).